Reading from the N-terminus, the 118-residue chain is Large ribosomal subunit protein bL19 (118 aa).

This sequence belongs to the bacterial ribosomal protein bL19 family.

In terms of biological role, this protein is located at the 30S-50S ribosomal subunit interface and may play a role in the structure and function of the aminoacyl-tRNA binding site. The protein is Large ribosomal subunit protein bL19 of Hahella chejuensis (strain KCTC 2396).